The primary structure comprises 1790 residues: Protein FAM186A (1790 aa).

It belongs to the FAM186 family.

The chain is Protein FAM186A (FAM186A) from Mus musculus (Mouse).